We begin with the raw amino-acid sequence, 473 residues long: Ras-GEF domain-containing family member 1B (473 aa).

Positions 34–164 constitute an N-terminal Ras-GEF domain; sequence HDNNLLSGSL…QMMQCLIRKL (131 aa). Residues 204–452 form the Ras-GEF domain; the sequence is NDPYTLAQQL…LYLASYESEG (249 aa).

In terms of assembly, interacts with Ras family proteins. Interacts with CCDC124 during cytokinesis.

It is found in the early endosome. It localises to the late endosome. The protein localises to the midbody. In terms of biological role, guanine nucleotide exchange factor (GEF) with specificity for RAP2A, it doesn't seems to activate other Ras family proteins (in vitro). This chain is Ras-GEF domain-containing family member 1B (RASGEF1B), found in Homo sapiens (Human).